A 408-amino-acid chain; its full sequence is Phosphoglycerate kinase (408 aa).

Residues 24–26, R40, 63–66, R120, and R160 each bind substrate; these read DIN and HQGR. ATP contacts are provided by residues E331 and 357 to 360; that span reads GGHM.

It belongs to the phosphoglycerate kinase family.

The protein resides in the cytoplasm. It carries out the reaction (2R)-3-phosphoglycerate + ATP = (2R)-3-phospho-glyceroyl phosphate + ADP. It functions in the pathway carbohydrate degradation; glycolysis; pyruvate from D-glyceraldehyde 3-phosphate: step 2/5. The polypeptide is Phosphoglycerate kinase (pgk) (Saccharolobus solfataricus (strain ATCC 35092 / DSM 1617 / JCM 11322 / P2) (Sulfolobus solfataricus)).